Reading from the N-terminus, the 139-residue chain is uncharacterized protein (139 aa).

This is an uncharacterized protein from Saccharolobus islandicus (Sulfolobus islandicus).